A 306-amino-acid chain; its full sequence is Aspartate carbamoyltransferase catalytic subunit (306 aa).

R55 and T56 together coordinate carbamoyl phosphate. K84 is an L-aspartate binding site. Carbamoyl phosphate is bound by residues R105, H133, and Q136. R166 and R227 together coordinate L-aspartate. Residues L265 and P266 each contribute to the carbamoyl phosphate site.

This sequence belongs to the aspartate/ornithine carbamoyltransferase superfamily. ATCase family. Heterododecamer (2C3:3R2) of six catalytic PyrB chains organized as two trimers (C3), and six regulatory PyrI chains organized as three dimers (R2).

The catalysed reaction is carbamoyl phosphate + L-aspartate = N-carbamoyl-L-aspartate + phosphate + H(+). The protein operates within pyrimidine metabolism; UMP biosynthesis via de novo pathway; (S)-dihydroorotate from bicarbonate: step 2/3. Catalyzes the condensation of carbamoyl phosphate and aspartate to form carbamoyl aspartate and inorganic phosphate, the committed step in the de novo pyrimidine nucleotide biosynthesis pathway. In Neisseria meningitidis serogroup C / serotype 2a (strain ATCC 700532 / DSM 15464 / FAM18), this protein is Aspartate carbamoyltransferase catalytic subunit.